The chain runs to 163 residues: Secreted RxLR effector protein 135 (163 aa).

An N-terminal signal peptide occupies residues 1 to 20 (MRRLYLFVLILATFLTTSHG). The short motif at 33 to 45 (RGLQEEAGEDEER) is the RxLR-dEER element. The segment at 94-127 (KNAGKPKRQTPQIAATGPAKPKVQSPEEAAAVPG) is disordered.

This sequence belongs to the RxLR effector family.

It is found in the secreted. The protein resides in the host nucleus. It localises to the host cytoplasm. Its function is as follows. Secreted effector that completely suppresses the host cell death induced by cell death-inducing proteins. In Plasmopara viticola (Downy mildew of grapevine), this protein is Secreted RxLR effector protein 135.